We begin with the raw amino-acid sequence, 233 residues long: MTIGIIGAMEEEVELLKNSMPSVEEIVIGGAKFYVGEVAGKEVVLLESGIGKVNAALGTTLMADRFKPEVIINTGSAGGMAEGLAVGDVIISDRLAYGDVDVTEFGYTYGQVPRMPAFYQGDAVLLKKAETIYREYFAASENKAVYGLVVTNDSFIMRPDQHETIRTFFPDVKAVEMEAAAIAQVAYQFDIPFLIIRAISDLANQEATISFDEFIHLAAKQSATCIIELLKTI.

Catalysis depends on Glu-12, which acts as the Proton acceptor. Substrate is bound by residues Gly-78, Ile-156, and 177 to 178; that span reads ME. Asp-201 functions as the Proton donor in the catalytic mechanism.

This sequence belongs to the PNP/UDP phosphorylase family. MtnN subfamily.

It carries out the reaction S-adenosyl-L-homocysteine + H2O = S-(5-deoxy-D-ribos-5-yl)-L-homocysteine + adenine. It catalyses the reaction S-methyl-5'-thioadenosine + H2O = 5-(methylsulfanyl)-D-ribose + adenine. The catalysed reaction is 5'-deoxyadenosine + H2O = 5-deoxy-D-ribose + adenine. Its pathway is amino-acid biosynthesis; L-methionine biosynthesis via salvage pathway; S-methyl-5-thio-alpha-D-ribose 1-phosphate from S-methyl-5'-thioadenosine (hydrolase route): step 1/2. Its function is as follows. Catalyzes the irreversible cleavage of the glycosidic bond in both 5'-methylthioadenosine (MTA) and S-adenosylhomocysteine (SAH/AdoHcy) to adenine and the corresponding thioribose, 5'-methylthioribose and S-ribosylhomocysteine, respectively. Also cleaves 5'-deoxyadenosine, a toxic by-product of radical S-adenosylmethionine (SAM) enzymes, into 5-deoxyribose and adenine. In Listeria monocytogenes serotype 4a (strain HCC23), this protein is 5'-methylthioadenosine/S-adenosylhomocysteine nucleosidase.